The sequence spans 525 residues: GMP synthase [glutamine-hydrolyzing] (525 aa).

In terms of domain architecture, Glutamine amidotransferase type-1 spans 9–207 (RILILDFGSQ…VLEICGCAAL (199 aa)). C86 acts as the Nucleophile in catalysis. Catalysis depends on residues H181 and E183. The region spanning 208–400 (WTPATIIEDA…LGLPYDMLYR (193 aa)) is the GMPS ATP-PPase domain. Residue 235 to 241 (SGGVDSS) participates in ATP binding.

As to quaternary structure, homodimer.

It catalyses the reaction XMP + L-glutamine + ATP + H2O = GMP + L-glutamate + AMP + diphosphate + 2 H(+). It participates in purine metabolism; GMP biosynthesis; GMP from XMP (L-Gln route): step 1/1. In terms of biological role, catalyzes the synthesis of GMP from XMP. In Edwardsiella ictaluri (strain 93-146), this protein is GMP synthase [glutamine-hydrolyzing].